The sequence spans 163 residues: MEVVKFEPDTEGIERRRGIKPFGNIGKIRVIKSTTAPRFNLYTTEVGIDCKEEQKQYIPYRPSLEEPAVSNAYVPPTIKRPETCSVKLSNLPLDMTRDRLHSIIKSHTNIFFMSPNLVMNRETGAFRGFAFVTLESRDDAVKLIKDLKGVAIDSLGLSAEIAR.

Residues 84-163 enclose the RRM domain; the sequence is CSVKLSNLPL…SLGLSAEIAR (80 aa).

In Encephalitozoon cuniculi (strain GB-M1) (Microsporidian parasite), this protein is RRM-domain-containing protein ECU01_0840.